Here is a 93-residue protein sequence, read N- to C-terminus: Small ribosomal subunit protein uS19c (93 aa).

Belongs to the universal ribosomal protein uS19 family.

It is found in the plastid. The protein localises to the chloroplast. Its function is as follows. Protein S19 forms a complex with S13 that binds strongly to the 16S ribosomal RNA. This Brachypodium distachyon (Purple false brome) protein is Small ribosomal subunit protein uS19c.